Reading from the N-terminus, the 1814-residue chain is U3 small nucleolar RNA-associated protein 10 (1814 aa).

The stretch at 583–620 (LDFQALLPFLLVALTDASERVRREAAAALAAVGSLYKK) is one HEAT 1 repeat. The next 2 helical transmembrane spans lie at 942-962 (IQSGMSYLLSLTLGSLLAIVN) and 998-1018 (ALLLVAGLSVIAPELVLHSVM). HEAT repeat units lie at residues 1042–1079 (QTIDQVVPALIQSLRDQKRDVVSGTSELLLSFTAAFEH), 1249–1286 (LTLVDFLDTIEVLLERPNDELRRKVLRLLEGRLRQNPE), 1293–1331 (IRVLDFLPTLVDIIRNSADILLKHAAVACIDRIAEKYGK), and 1770–1807 (ALLPEMLPYISELMEDEDENVEREVRKWVKQIENVLGE).

Belongs to the HEATR1/UTP10 family. As to quaternary structure, component of the ribosomal small subunit (SSU) processome.

It localises to the nucleus. It is found in the nucleolus. Its subcellular location is the membrane. Functionally, involved in nucleolar processing of pre-18S ribosomal RNA. Involved in ribosome biosynthesis. This chain is U3 small nucleolar RNA-associated protein 10, found in Neosartorya fischeri (strain ATCC 1020 / DSM 3700 / CBS 544.65 / FGSC A1164 / JCM 1740 / NRRL 181 / WB 181) (Aspergillus fischerianus).